We begin with the raw amino-acid sequence, 95 residues long: Exodeoxyribonuclease 7 small subunit (95 aa).

Positions 62-83 (LTKDESKKTNKTGFRGESKTTE) are enriched in basic and acidic residues. Residues 62–95 (LTKDESKKTNKTGFRGESKTTETKNNTAQEEDLF) form a disordered region.

It belongs to the XseB family. As to quaternary structure, heterooligomer composed of large and small subunits.

Its subcellular location is the cytoplasm. It carries out the reaction Exonucleolytic cleavage in either 5'- to 3'- or 3'- to 5'-direction to yield nucleoside 5'-phosphates.. Bidirectionally degrades single-stranded DNA into large acid-insoluble oligonucleotides, which are then degraded further into small acid-soluble oligonucleotides. This chain is Exodeoxyribonuclease 7 small subunit, found in Leptospira interrogans serogroup Icterohaemorrhagiae serovar copenhageni (strain Fiocruz L1-130).